Here is a 438-residue protein sequence, read N- to C-terminus: Probable glucose-6-phosphate isomerase (438 aa).

Glu280 serves as the catalytic Proton donor. Catalysis depends on residues His301 and Lys410.

The protein belongs to the GPI family.

It is found in the cytoplasm. It catalyses the reaction alpha-D-glucose 6-phosphate = beta-D-fructose 6-phosphate. Its pathway is carbohydrate biosynthesis; gluconeogenesis. It functions in the pathway carbohydrate degradation; glycolysis; D-glyceraldehyde 3-phosphate and glycerone phosphate from D-glucose: step 2/4. In terms of biological role, catalyzes the reversible isomerization of glucose-6-phosphate to fructose-6-phosphate. The sequence is that of Probable glucose-6-phosphate isomerase from Methanococcus maripaludis (strain DSM 14266 / JCM 13030 / NBRC 101832 / S2 / LL).